Consider the following 178-residue polypeptide: Vegetative protein (178 aa).

Disordered stretches follow at residues 67–102 and 138–158; these read AGRR…AAAG and NRRP…DIKL. Residues 76–90 show a composition bias toward low complexity; that stretch reads PAARSAVTAAPAAVG.

The polypeptide is Vegetative protein (vegA) (Myxococcus xanthus).